The sequence spans 86 residues: Small ribosomal subunit protein bS20 (86 aa).

The interval 1–25 is disordered; that stretch reads MANIKSQQKRNKTNERARLRNKSVK.

Belongs to the bacterial ribosomal protein bS20 family.

In terms of biological role, binds directly to 16S ribosomal RNA. In Mycobacterium avium (strain 104), this protein is Small ribosomal subunit protein bS20.